A 383-amino-acid polypeptide reads, in one-letter code: Succinyl-diaminopimelate desuccinylase (383 aa).

A Zn(2+)-binding site is contributed by H70. The active site involves D72. D103 is a binding site for Zn(2+). Residue E137 is the Proton acceptor of the active site. 3 residues coordinate Zn(2+): E138, E166, and H352.

It belongs to the peptidase M20A family. DapE subfamily. Homodimer. Zn(2+) is required as a cofactor. Co(2+) serves as cofactor.

The catalysed reaction is N-succinyl-(2S,6S)-2,6-diaminopimelate + H2O = (2S,6S)-2,6-diaminopimelate + succinate. Its pathway is amino-acid biosynthesis; L-lysine biosynthesis via DAP pathway; LL-2,6-diaminopimelate from (S)-tetrahydrodipicolinate (succinylase route): step 3/3. Functionally, catalyzes the hydrolysis of N-succinyl-L,L-diaminopimelic acid (SDAP), forming succinate and LL-2,6-diaminopimelate (DAP), an intermediate involved in the bacterial biosynthesis of lysine and meso-diaminopimelic acid, an essential component of bacterial cell walls. This Hahella chejuensis (strain KCTC 2396) protein is Succinyl-diaminopimelate desuccinylase.